Here is a 359-residue protein sequence, read N- to C-terminus: 3-isopropylmalate dehydrogenase (359 aa).

Residues arginine 97, arginine 107, arginine 135, and aspartate 224 each coordinate substrate. Residues aspartate 224, aspartate 248, and aspartate 252 each contribute to the Mg(2+) site. 282-294 (GSAPDIAGKDIAN) contacts NAD(+).

The protein belongs to the isocitrate and isopropylmalate dehydrogenases family. LeuB type 1 subfamily. As to quaternary structure, homodimer. The cofactor is Mg(2+). Mn(2+) serves as cofactor.

The protein localises to the cytoplasm. It catalyses the reaction (2R,3S)-3-isopropylmalate + NAD(+) = 4-methyl-2-oxopentanoate + CO2 + NADH. Its pathway is amino-acid biosynthesis; L-leucine biosynthesis; L-leucine from 3-methyl-2-oxobutanoate: step 3/4. In terms of biological role, catalyzes the oxidation of 3-carboxy-2-hydroxy-4-methylpentanoate (3-isopropylmalate) to 3-carboxy-4-methyl-2-oxopentanoate. The product decarboxylates to 4-methyl-2 oxopentanoate. The protein is 3-isopropylmalate dehydrogenase of Prochlorococcus marinus (strain NATL2A).